The following is a 406-amino-acid chain: Bifunctional enzyme Fae/Hps (406 aa).

Residues 1–164 (MSDIYEIGEA…AEKDRGTHPI (164 aa)) form a formaldehyde-activating enzyme region. His20 (proton donor) is an active-site residue. Substrate contacts are provided by Asp22, Leu51, Lys69, Thr71, and Gln86. The segment at 165–406 (MGFKAMKLWN…RLALDEDEKI (242 aa)) is 3-hexulose-6-phosphate synthase.

It in the N-terminal section; belongs to the formaldehyde-activating enzyme family. This sequence in the C-terminal section; belongs to the HPS/KGPDC family. HPS subfamily.

The catalysed reaction is 5,6,7,8-tetrahydromethanopterin + formaldehyde = 5,10-methylenetetrahydromethanopterin + H2O. The enzyme catalyses D-ribulose 5-phosphate + formaldehyde = D-arabino-hex-3-ulose 6-phosphate. The protein operates within carbohydrate biosynthesis; D-ribose 5-phosphate biosynthesis. In terms of biological role, catalyzes the condensation of formaldehyde with tetrahydromethanopterin (H(4)MPT) to 5,10-methylenetetrahydromethanopterin. Catalyzes the reversible formation of ribulose-5-phosphate and formaldehyde from 3-hexulose-6-phosphate. The polypeptide is Bifunctional enzyme Fae/Hps (Methanosphaera stadtmanae (strain ATCC 43021 / DSM 3091 / JCM 11832 / MCB-3)).